The following is a 373-amino-acid chain: Flagellar P-ring protein (373 aa).

Positions 1 to 28 (MPSVSAVILKLAAAALSALLLSGVAANA) are cleaved as a signal peptide.

It belongs to the FlgI family. As to quaternary structure, the basal body constitutes a major portion of the flagellar organelle and consists of four rings (L,P,S, and M) mounted on a central rod.

It localises to the periplasm. It is found in the bacterial flagellum basal body. Its function is as follows. Assembles around the rod to form the L-ring and probably protects the motor/basal body from shearing forces during rotation. This chain is Flagellar P-ring protein, found in Rhodopseudomonas palustris (strain HaA2).